A 358-amino-acid polypeptide reads, in one-letter code: 3-dehydroquinate synthase (358 aa).

NAD(+) contacts are provided by residues 70-75, 104-108, 128-129, lysine 141, lysine 150, and 168-171; these read DGEQFK, GVIGD, TT, and CLHT. Zn(2+) contacts are provided by glutamate 183, histidine 246, and histidine 263.

This sequence belongs to the sugar phosphate cyclases superfamily. Dehydroquinate synthase family. Requires Co(2+) as cofactor. It depends on Zn(2+) as a cofactor. NAD(+) is required as a cofactor.

Its subcellular location is the cytoplasm. It catalyses the reaction 7-phospho-2-dehydro-3-deoxy-D-arabino-heptonate = 3-dehydroquinate + phosphate. Its pathway is metabolic intermediate biosynthesis; chorismate biosynthesis; chorismate from D-erythrose 4-phosphate and phosphoenolpyruvate: step 2/7. Catalyzes the conversion of 3-deoxy-D-arabino-heptulosonate 7-phosphate (DAHP) to dehydroquinate (DHQ). This chain is 3-dehydroquinate synthase, found in Shewanella baltica (strain OS185).